Reading from the N-terminus, the 424-residue chain is Serine--tRNA ligase (424 aa).

232–234 (TAE) contacts L-serine. Residue 263–265 (RSE) coordinates ATP. Residue glutamate 286 participates in L-serine binding. Residue 350–353 (EISS) participates in ATP binding. An L-serine-binding site is contributed by serine 385.

This sequence belongs to the class-II aminoacyl-tRNA synthetase family. Type-1 seryl-tRNA synthetase subfamily. In terms of assembly, homodimer. The tRNA molecule binds across the dimer.

The protein localises to the cytoplasm. The catalysed reaction is tRNA(Ser) + L-serine + ATP = L-seryl-tRNA(Ser) + AMP + diphosphate + H(+). It carries out the reaction tRNA(Sec) + L-serine + ATP = L-seryl-tRNA(Sec) + AMP + diphosphate + H(+). It participates in aminoacyl-tRNA biosynthesis; selenocysteinyl-tRNA(Sec) biosynthesis; L-seryl-tRNA(Sec) from L-serine and tRNA(Sec): step 1/1. Catalyzes the attachment of serine to tRNA(Ser). Is also able to aminoacylate tRNA(Sec) with serine, to form the misacylated tRNA L-seryl-tRNA(Sec), which will be further converted into selenocysteinyl-tRNA(Sec). The chain is Serine--tRNA ligase from Latilactobacillus sakei subsp. sakei (strain 23K) (Lactobacillus sakei subsp. sakei).